A 205-amino-acid polypeptide reads, in one-letter code: Outer-membrane lipoprotein carrier protein (205 aa).

An N-terminal signal peptide occupies residues 1-21 (MKKIVLLVTLVFSINYSFANA).

The protein belongs to the LolA family. In terms of assembly, monomer.

The protein resides in the periplasm. Functionally, participates in the translocation of lipoproteins from the inner membrane to the outer membrane. Only forms a complex with a lipoprotein if the residue after the N-terminal Cys is not an aspartate (The Asp acts as a targeting signal to indicate that the lipoprotein should stay in the inner membrane). In Francisella philomiragia subsp. philomiragia (strain ATCC 25017 / CCUG 19701 / FSC 153 / O#319-036), this protein is Outer-membrane lipoprotein carrier protein.